Here is a 132-residue protein sequence, read N- to C-terminus: DNA-directed RNA polymerase subunit omega (132 aa).

Belongs to the RNA polymerase subunit omega family. The RNAP catalytic core consists of 2 alpha, 1 beta, 1 beta' and 1 omega subunit. When a sigma factor is associated with the core the holoenzyme is formed, which can initiate transcription.

The catalysed reaction is RNA(n) + a ribonucleoside 5'-triphosphate = RNA(n+1) + diphosphate. In terms of biological role, promotes RNA polymerase assembly. Latches the N- and C-terminal regions of the beta' subunit thereby facilitating its interaction with the beta and alpha subunits. In Bartonella quintana (strain Toulouse) (Rochalimaea quintana), this protein is DNA-directed RNA polymerase subunit omega.